The primary structure comprises 364 residues: DNA replication and repair protein RecF (364 aa).

ATP is bound at residue 30 to 37; it reads GNNAQGKT.

Belongs to the RecF family.

Its subcellular location is the cytoplasm. The RecF protein is involved in DNA metabolism; it is required for DNA replication and normal SOS inducibility. RecF binds preferentially to single-stranded, linear DNA. It also seems to bind ATP. In Clostridium botulinum (strain Loch Maree / Type A3), this protein is DNA replication and repair protein RecF.